Consider the following 350-residue polypeptide: Cobalt-precorrin-5B C(1)-methyltransferase (350 aa).

This sequence belongs to the CbiD family.

It carries out the reaction Co-precorrin-5B + S-adenosyl-L-methionine = Co-precorrin-6A + S-adenosyl-L-homocysteine. It participates in cofactor biosynthesis; adenosylcobalamin biosynthesis; cob(II)yrinate a,c-diamide from sirohydrochlorin (anaerobic route): step 6/10. Functionally, catalyzes the methylation of C-1 in cobalt-precorrin-5B to form cobalt-precorrin-6A. The polypeptide is Cobalt-precorrin-5B C(1)-methyltransferase (Syntrophotalea carbinolica (strain DSM 2380 / NBRC 103641 / GraBd1) (Pelobacter carbinolicus)).